Consider the following 264-residue polypeptide: Glutamate racemase (264 aa).

Residues 10 to 11 (DS) and 42 to 43 (YG) each bind substrate. Cys-73 functions as the Proton donor/acceptor in the catalytic mechanism. 74-75 (NT) lines the substrate pocket. The active-site Proton donor/acceptor is Cys-183. 184–185 (TH) provides a ligand contact to substrate.

Belongs to the aspartate/glutamate racemases family.

The catalysed reaction is L-glutamate = D-glutamate. It functions in the pathway cell wall biogenesis; peptidoglycan biosynthesis. In terms of biological role, provides the (R)-glutamate required for cell wall biosynthesis. The polypeptide is Glutamate racemase (Streptococcus pyogenes serotype M2 (strain MGAS10270)).